The primary structure comprises 579 residues: Laccase-4 (579 aa).

The first 28 residues, 1–28 (MTMAISSALPSPLLLAASLLLLIVQAQG), serve as a signal peptide directing secretion. Plastocyanin-like domains follow at residues 36–152 (NVQM…PKLG) and 162–316 (KEVP…YENP). 2 N-linked (GlcNAc...) asparagine glycosylation sites follow: asparagine 41 and asparagine 82. 2 residues coordinate Cu cation: histidine 86 and histidine 88. An N-linked (GlcNAc...) asparagine glycan is attached at asparagine 118. Cu cation-binding residues include histidine 131 and histidine 133. 12 N-linked (GlcNAc...) asparagine glycosylation sites follow: asparagine 191, asparagine 207, asparagine 243, asparagine 304, asparagine 340, asparagine 347, asparagine 386, asparagine 393, asparagine 403, asparagine 439, asparagine 446, and asparagine 462. Residues 429–563 (DFPVAPLSPF…RMAWLVLDGS (135 aa)) enclose the Plastocyanin-like 3 domain. Residues histidine 480, histidine 483, histidine 485, histidine 542, cysteine 543, histidine 544, and histidine 548 each coordinate Cu cation.

It belongs to the multicopper oxidase family. Requires Cu cation as cofactor.

It localises to the secreted. The protein localises to the extracellular space. Its subcellular location is the apoplast. The enzyme catalyses 4 hydroquinone + O2 = 4 benzosemiquinone + 2 H2O. Lignin degradation and detoxification of lignin-derived products. This chain is Laccase-4 (LAC4), found in Oryza sativa subsp. japonica (Rice).